The sequence spans 293 residues: Acetyl-coenzyme A carboxylase carboxyl transferase subunit beta (293 aa).

The 265-residue stretch at 29–293 (LWVKCSECSQ…GVKELAEANT (265 aa)) folds into the CoA carboxyltransferase N-terminal domain. The Zn(2+) site is built by C33, C36, C52, and C55. Residues 33–55 (CSECSQVAYRKDLISNFNVCSNC) form a C4-type zinc finger.

Belongs to the AccD/PCCB family. As to quaternary structure, acetyl-CoA carboxylase is a heterohexamer composed of biotin carboxyl carrier protein (AccB), biotin carboxylase (AccC) and two subunits each of ACCase subunit alpha (AccA) and ACCase subunit beta (AccD). Zn(2+) is required as a cofactor.

The protein localises to the cytoplasm. It catalyses the reaction N(6)-carboxybiotinyl-L-lysyl-[protein] + acetyl-CoA = N(6)-biotinyl-L-lysyl-[protein] + malonyl-CoA. Its pathway is lipid metabolism; malonyl-CoA biosynthesis; malonyl-CoA from acetyl-CoA: step 1/1. Functionally, component of the acetyl coenzyme A carboxylase (ACC) complex. Biotin carboxylase (BC) catalyzes the carboxylation of biotin on its carrier protein (BCCP) and then the CO(2) group is transferred by the transcarboxylase to acetyl-CoA to form malonyl-CoA. The sequence is that of Acetyl-coenzyme A carboxylase carboxyl transferase subunit beta from Prochlorococcus marinus (strain MIT 9301).